The sequence spans 538 residues: Chaperonin GroEL (538 aa).

ATP contacts are provided by residues 29–32 (TLGP), 86–90 (DGTTT), Gly413, 477–479 (NAA), and Asp493.

It belongs to the chaperonin (HSP60) family. Forms a cylinder of 14 subunits composed of two heptameric rings stacked back-to-back. Interacts with the co-chaperonin GroES.

The protein resides in the cytoplasm. The catalysed reaction is ATP + H2O + a folded polypeptide = ADP + phosphate + an unfolded polypeptide.. Together with its co-chaperonin GroES, plays an essential role in assisting protein folding. The GroEL-GroES system forms a nano-cage that allows encapsulation of the non-native substrate proteins and provides a physical environment optimized to promote and accelerate protein folding. The sequence is that of Chaperonin GroEL from Bifidobacterium adolescentis (strain ATCC 15703 / DSM 20083 / NCTC 11814 / E194a).